The following is a 401-amino-acid chain: 8-amino-7-oxononanoate synthase (401 aa).

Substrate is bound at residue R24. 111-112 is a binding site for pyridoxal 5'-phosphate; sequence GF. H137 contacts substrate. The pyridoxal 5'-phosphate site is built by S183, H211, and T240. An N6-(pyridoxal phosphate)lysine modification is found at K243. T357 serves as a coordination point for substrate.

The protein belongs to the class-II pyridoxal-phosphate-dependent aminotransferase family. BioF subfamily. In terms of assembly, homodimer. Requires pyridoxal 5'-phosphate as cofactor.

It carries out the reaction 6-carboxyhexanoyl-[ACP] + L-alanine + H(+) = (8S)-8-amino-7-oxononanoate + holo-[ACP] + CO2. Its pathway is cofactor biosynthesis; biotin biosynthesis. In terms of biological role, catalyzes the decarboxylative condensation of pimeloyl-[acyl-carrier protein] and L-alanine to produce 8-amino-7-oxononanoate (AON), [acyl-carrier protein], and carbon dioxide. This is 8-amino-7-oxononanoate synthase from Xylella fastidiosa (strain 9a5c).